Reading from the N-terminus, the 194-residue chain is Ion-translocating oxidoreductase complex subunit A (194 aa).

Transmembrane regions (helical) follow at residues 4 to 24 (LALI…QFLG), 39 to 59 (IGLS…SHIL), 72 to 92 (LRTI…EMLV), 102 to 122 (VLGI…VALL), 135 to 155 (TTQG…FAAL), and 172 to 192 (AIGM…SGLV).

This sequence belongs to the NqrDE/RnfAE family. As to quaternary structure, the complex is composed of six subunits: RnfA, RnfB, RnfC, RnfD, RnfE and RnfG.

Its subcellular location is the cell inner membrane. Functionally, part of a membrane-bound complex that couples electron transfer with translocation of ions across the membrane. This Pseudomonas aeruginosa (strain LESB58) protein is Ion-translocating oxidoreductase complex subunit A.